The primary structure comprises 61 residues: Small ribosomal subunit protein uS14 (61 aa).

Residues Cys24, Cys27, Cys40, and Cys43 each contribute to the Zn(2+) site.

This sequence belongs to the universal ribosomal protein uS14 family. Zinc-binding uS14 subfamily. As to quaternary structure, part of the 30S ribosomal subunit. Contacts proteins S3 and S10. Zn(2+) serves as cofactor.

In terms of biological role, binds 16S rRNA, required for the assembly of 30S particles and may also be responsible for determining the conformation of the 16S rRNA at the A site. In Bifidobacterium longum (strain DJO10A), this protein is Small ribosomal subunit protein uS14.